The sequence spans 257 residues: Short-chain dehydrogenase reductase 3b (257 aa).

12-36 lines the NAD(+) pocket; that stretch reads IITGGASGIGAESVRLFTEHGARVV. Position 144 (serine 144) interacts with substrate. The Proton acceptor role is filled by tyrosine 157.

Belongs to the short-chain dehydrogenases/reductases (SDR) family.

This Arabidopsis thaliana (Mouse-ear cress) protein is Short-chain dehydrogenase reductase 3b (SDR3b).